The following is a 299-amino-acid chain: 11-beta-hydroxysteroid dehydrogenase-like 4A (299 aa).

A helical; Signal-anchor for type II membrane protein transmembrane segment spans residues 10 to 30; it reads ILLPIVTVSFLLVFMPFSIFF. Residues 54 to 80 and aspartate 105 each bind NADP(+); that span reads GSSS…VARR. Serine 184 lines the substrate pocket. The active-site Proton acceptor is tyrosine 197. NADP(+) contacts are provided by residues 197 to 201 and lysine 201; that span reads YAASK.

It belongs to the short-chain dehydrogenases/reductases (SDR) family.

It is found in the membrane. This is 11-beta-hydroxysteroid dehydrogenase-like 4A (HSD4) from Arabidopsis thaliana (Mouse-ear cress).